The primary structure comprises 458 residues: Bifunctional protein GlmU (458 aa).

The interval 1–224 is pyrophosphorylase; that stretch reads MTVIALAAGK…PKVAVGVNNQ (224 aa). UDP-N-acetyl-alpha-D-glucosamine is bound by residues 6–9, Lys-20, Gln-71, and 76–77; these read LAAG and GT. Asp-99 is a binding site for Mg(2+). 4 residues coordinate UDP-N-acetyl-alpha-D-glucosamine: Gly-136, Glu-150, Asn-165, and Asn-222. Mg(2+) is bound at residue Asn-222. Residues 225–245 form a linker region; that stretch reads LELARATRLLFKRKALRLMED. Residues 246 to 458 are N-acetyltransferase; the sequence is GVLMIDPRTV…TAETEEKEQV (213 aa). The UDP-N-acetyl-alpha-D-glucosamine site is built by Arg-328 and Lys-346. His-358 serves as the catalytic Proton acceptor. UDP-N-acetyl-alpha-D-glucosamine contacts are provided by Tyr-361 and Asn-372. Acetyl-CoA-binding positions include 381–382, Ser-401, Ser-419, and Arg-436; that span reads NY.

This sequence in the N-terminal section; belongs to the N-acetylglucosamine-1-phosphate uridyltransferase family. It in the C-terminal section; belongs to the transferase hexapeptide repeat family. Homotrimer. It depends on Mg(2+) as a cofactor.

It localises to the cytoplasm. The enzyme catalyses alpha-D-glucosamine 1-phosphate + acetyl-CoA = N-acetyl-alpha-D-glucosamine 1-phosphate + CoA + H(+). It catalyses the reaction N-acetyl-alpha-D-glucosamine 1-phosphate + UTP + H(+) = UDP-N-acetyl-alpha-D-glucosamine + diphosphate. The protein operates within nucleotide-sugar biosynthesis; UDP-N-acetyl-alpha-D-glucosamine biosynthesis; N-acetyl-alpha-D-glucosamine 1-phosphate from alpha-D-glucosamine 6-phosphate (route II): step 2/2. It participates in nucleotide-sugar biosynthesis; UDP-N-acetyl-alpha-D-glucosamine biosynthesis; UDP-N-acetyl-alpha-D-glucosamine from N-acetyl-alpha-D-glucosamine 1-phosphate: step 1/1. Its pathway is bacterial outer membrane biogenesis; LPS lipid A biosynthesis. Catalyzes the last two sequential reactions in the de novo biosynthetic pathway for UDP-N-acetylglucosamine (UDP-GlcNAc). The C-terminal domain catalyzes the transfer of acetyl group from acetyl coenzyme A to glucosamine-1-phosphate (GlcN-1-P) to produce N-acetylglucosamine-1-phosphate (GlcNAc-1-P), which is converted into UDP-GlcNAc by the transfer of uridine 5-monophosphate (from uridine 5-triphosphate), a reaction catalyzed by the N-terminal domain. In Bdellovibrio bacteriovorus (strain ATCC 15356 / DSM 50701 / NCIMB 9529 / HD100), this protein is Bifunctional protein GlmU.